Reading from the N-terminus, the 73-residue chain is Beta-defensin 50 (73 aa).

A signal peptide spans 1-23 (MKTLCFLLLTSGLLYLMVKGVGS). Disulfide bonds link Cys-34–Cys-63 and Cys-46–Cys-64.

The protein belongs to the beta-defensin family. In terms of tissue distribution, highly expressed in prostate. Not expressed in uterus, epididymis, ovary, testis, spleen, submaxillary gland, thymus, thyroid, pancreas, smooth muscle, skeletal muscle, heart, kidney, lung, liver, eye and brain.

Its subcellular location is the secreted. Has bactericidal activity. The protein is Beta-defensin 50 (Defb50) of Mus musculus (Mouse).